Reading from the N-terminus, the 233-residue chain is Eukaryotic translation initiation factor 4E-1 (233 aa).

The interval 1-51 (MVVEDALKTSASEDQAKTETNPKPREEDDEPEEGEIVGDEESASKPSKGIA) is disordered. The span at 14–26 (DQAKTETNPKPRE) shows a compositional bias: basic and acidic residues. Positions 27–41 (EDDEPEEGEIVGDEE) are enriched in acidic residues. EIF4G-binding regions lie at residues 55 to 58 (HALE) and 65 to 104 (FDSPAAKSAKTKQEDWGSSIRPIYTFSTVEEFWSIYNNIR). Residues 76–81 (KQEDWG), Lys-108, and 126–127 (WE) each bind mRNA. Cys-131 and Cys-169 are joined by a disulfide. Residues 152-161 (YTLLGMIGEQ) are EIF4G-binding. MRNA-binding positions include 176-181 (RNRQEK) and 221-225 (MRHER).

This sequence belongs to the eukaryotic initiation factor 4E family. EIF4F is a multi-subunit complex, the composition of which varies with external and internal environmental conditions. It is composed of at least EIF4A, EIF4E and EIF4G. EIF4E is also known to interact with other partners. In higher plants two isoforms of EIF4F have been identified, named isoform EIF4F and isoform EIF(iso)4F. Isoform EIF4F has subunits p220 and p26, whereas isoform EIF(iso)4F has subunits p82 and p28. In terms of assembly, (Microbial infection) Does not interact with the VPg of Plum pox virus (PPV) strain D. According to the redox status, the Cys-131-Cys-169 disulfide bridge may have a role in regulating protein function by affecting its ability to bind capped mRNA. In terms of tissue distribution, mostly expressed in leaves, flower buds, leaf buds and anthers, to a lower extent in roots, stems and green immature fruit, and, at low levels, in petals.

The protein localises to the nucleus. Its subcellular location is the cytoplasm. Component of the protein complex eIF4F, which is involved in the recognition of the mRNA cap, ATP-dependent unwinding of 5'-terminal secondary structure and recruitment of mRNA to the ribosome. Recognizes and binds the 7-methylguanosine-containing mRNA cap during an early step in the initiation of protein synthesis and facilitates ribosome binding by inducing the unwinding of the mRNAs secondary structures. In terms of biological role, (Microbial infection) Not involved in the plum pox virus (PPV) strain D infection process. The chain is Eukaryotic translation initiation factor 4E-1 from Prunus domestica (Garden plum).